The following is a 922-amino-acid chain: Periodic tryptophan protein 2 homolog (922 aa).

WD repeat units lie at residues 12 to 52, 53 to 92, 94 to 132, 141 to 180, 182 to 221, 271 to 310, 313 to 353, 356 to 395, 398 to 439, 443 to 485, 486 to 525, 528 to 567, 590 to 629, and 691 to 731; these read GTVY…TLPI, QSKYNIRRLALSPNGQILITSDESGHTLIINLTRQVVLGE, KFFKTPKSILFSPNGAIIAIAVLEKVFLFKTPIIQKQPN, THKSAVISMCWSADSLKLMIGCKNGTLLIRQGKSERVSYF, VKGSGIINCFFGNEESTIAYAVTPTGLASWDYKTNEEMEQ, GVKCKVKTVCFHLKSKLLLVGFSTGQFILYEMPGFNQLYK, ISSH…YILK, GHSYNMNTVAYSPDGQTIATGGEDGKVKIWNTTSGYCYIT, EHEG…NFRT, PNKT…DILS, GHQSPVCELAFDPINPFLASASWDKSCKIWNIFEDREIRE, QHTSDVLTCAYSQDGKKFIVSCLDGTIQIYETSTWGQIGL, SAGRAFTKIAFTPNGECIIAGGNSKYICIYHIDQQVLIKK, and KKKQ…DPTD. The interval 893–922 is disordered; it reads ESKKNKEQEEDQFSDDEETVYQNNKKNKNK. Positions 900-911 are enriched in acidic residues; that stretch reads QEEDQFSDDEET.

The protein belongs to the WD repeat PWP2 family. In terms of assembly, part of the small subunit (SSU) processome, composed of more than 70 proteins and the RNA chaperone small nucleolar RNA (snoRNA) U3.

The protein resides in the nucleus. It is found in the nucleolus. Functionally, part of the small subunit (SSU) processome, first precursor of the small eukaryotic ribosomal subunit. During the assembly of the SSU processome in the nucleolus, many ribosome biogenesis factors, an RNA chaperone and ribosomal proteins associate with the nascent pre-rRNA and work in concert to generate RNA folding, modifications, rearrangements and cleavage as well as targeted degradation of pre-ribosomal RNA by the RNA exosome. The protein is Periodic tryptophan protein 2 homolog (pwp2) of Dictyostelium discoideum (Social amoeba).